A 199-amino-acid polypeptide reads, in one-letter code: Thymidine kinase (199 aa).

ATP contacts are provided by residues 9–16 (GAMSSGKS) and 93–96 (DEAQ). The active-site Proton acceptor is the Glu94. Zn(2+)-binding residues include Cys151, Cys154, Cys188, and His191.

The protein belongs to the thymidine kinase family. As to quaternary structure, homotetramer.

It localises to the cytoplasm. The enzyme catalyses thymidine + ATP = dTMP + ADP + H(+). The chain is Thymidine kinase from Lactobacillus johnsonii (strain CNCM I-12250 / La1 / NCC 533).